Consider the following 123-residue polypeptide: Integration host factor subunit alpha (123 aa).

Belongs to the bacterial histone-like protein family. Heterodimer of an alpha and a beta chain.

In terms of biological role, this protein is one of the two subunits of integration host factor, a specific DNA-binding protein that functions in genetic recombination as well as in transcriptional and translational control. The protein is Integration host factor subunit alpha of Polaromonas naphthalenivorans (strain CJ2).